Reading from the N-terminus, the 325-residue chain is GMP reductase (325 aa).

Residue cysteine 174 is the Thioimidate intermediate of the active site. An NADP(+)-binding site is contributed by 203-226 (MIADGGIRTHGDIAKSIRFGASMV).

This sequence belongs to the IMPDH/GMPR family. GuaC type 2 subfamily.

It carries out the reaction IMP + NH4(+) + NADP(+) = GMP + NADPH + 2 H(+). Functionally, catalyzes the irreversible NADPH-dependent deamination of GMP to IMP. It functions in the conversion of nucleobase, nucleoside and nucleotide derivatives of G to A nucleotides, and in maintaining the intracellular balance of A and G nucleotides. The protein is GMP reductase of Staphylococcus carnosus (strain TM300).